We begin with the raw amino-acid sequence, 183 residues long: Capsid protein (183 aa).

The interval 136 to 183 (NAPILSTLPETTVVRRRGRSPRRRTPSPRRRRSQSPRRRRSQSRESQC) is disordered. Over residues 149–176 (VRRRGRSPRRRTPSPRRRRSQSPRRRRS) the composition is skewed to basic residues. A phosphoserine; by host mark is found at S155, S162, and S170. One copy of the 1; half-length repeat lies at 155–161 (SPRRRTP). Residues 155-177 (SPRRRTPSPRRRRSQSPRRRRSQ) are 3 X 8 AA repeats of S-P-R-R-R-[PR]-S-Q. Residues 158 to 175 (RRTPSPRRRRSQSPRRRR) carry the Bipartite nuclear localization signal motif. Repeat copies occupy residues 162-169 (SPRRRRSQ) and 170-177 (SPRRRRSQ). An RNA binding region spans residues 177-183 (QSRESQC).

Belongs to the orthohepadnavirus core antigen family. In terms of assembly, homodimerizes, then multimerizes. Interacts with cytosol exposed regions of viral L glycoprotein present in the reticulum-to-Golgi compartment. Interacts with human FLNB. Phosphorylated form interacts with host importin alpha; this interaction depends on the exposure of the NLS, which itself depends upon genome maturation and/or phosphorylation of the capsid protein. Interacts with host NUP153. In terms of processing, phosphorylated by host SRPK1, SRPK2, and maybe protein kinase C or GAPDH. Phosphorylation is critical for pregenomic RNA packaging. Protein kinase C phosphorylation is stimulated by HBx protein and may play a role in transport of the viral genome to the nucleus at the late step during the viral replication cycle.

The protein localises to the virion. It is found in the host cytoplasm. Self assembles to form an icosahedral capsid. Most capsids appear to be large particles with an icosahedral symmetry of T=4 and consist of 240 copies of capsid protein, though a fraction forms smaller T=3 particles consisting of 180 capsid proteins. Entering capsids are transported along microtubules to the nucleus. Phosphorylation of the capsid is thought to induce exposure of nuclear localization signal in the C-terminal portion of the capsid protein that allows binding to the nuclear pore complex via the importin (karyopherin-) alpha and beta. Capsids are imported in intact form through the nuclear pore into the nuclear basket, where it probably binds NUP153. Only capsids that contain the mature viral genome can release the viral DNA and capsid protein into the nucleoplasm. Immature capsids get stuck in the basket. Capsids encapsulate the pre-genomic RNA and the P protein. Pre-genomic RNA is reverse-transcribed into DNA while the capsid is still in the cytoplasm. The capsid can then either be directed to the nucleus, providing more genomes for transcription, or bud through the endoplasmic reticulum to provide new virions. In Homo sapiens (Human), this protein is Capsid protein.